The primary structure comprises 249 residues: DNA polymerase sliding clamp 3 (249 aa).

The protein belongs to the PCNA family. In terms of assembly, homotrimer. The subunits circularize to form a toroid; DNA passes through its center. Replication factor C (RFC) is required to load the toroid on the DNA.

Its function is as follows. Sliding clamp subunit that acts as a moving platform for DNA processing. Responsible for tethering the catalytic subunit of DNA polymerase and other proteins to DNA during high-speed replication. This is DNA polymerase sliding clamp 3 from Aeropyrum pernix (strain ATCC 700893 / DSM 11879 / JCM 9820 / NBRC 100138 / K1).